Consider the following 81-residue polypeptide: uncharacterized protein (81 aa).

The interval 11 to 34 (GSVSSSNKVSVANGSSSSSFGSNG) is disordered.

This is an uncharacterized protein from Dictyostelium discoideum (Social amoeba).